A 436-amino-acid polypeptide reads, in one-letter code: Histidinol dehydrogenase (436 aa).

3 residues coordinate substrate: serine 242, glutamine 264, and histidine 267. Glutamine 264 and histidine 267 together coordinate Zn(2+). Active-site proton acceptor residues include glutamate 332 and histidine 333. Substrate contacts are provided by histidine 333, aspartate 366, glutamate 420, and histidine 425. Position 366 (aspartate 366) interacts with Zn(2+). Histidine 425 serves as a coordination point for Zn(2+).

Belongs to the histidinol dehydrogenase family. Requires Zn(2+) as cofactor.

The catalysed reaction is L-histidinol + 2 NAD(+) + H2O = L-histidine + 2 NADH + 3 H(+). It functions in the pathway amino-acid biosynthesis; L-histidine biosynthesis; L-histidine from 5-phospho-alpha-D-ribose 1-diphosphate: step 9/9. Catalyzes the sequential NAD-dependent oxidations of L-histidinol to L-histidinaldehyde and then to L-histidine. This is Histidinol dehydrogenase from Nitratidesulfovibrio vulgaris (strain ATCC 29579 / DSM 644 / CCUG 34227 / NCIMB 8303 / VKM B-1760 / Hildenborough) (Desulfovibrio vulgaris).